A 459-amino-acid polypeptide reads, in one-letter code: MVEKLWGGRFEASLDKQTEEFGASIKFEQRLAPFDLKGSLAHVKMLGETGIITAEEATTIANGLIKVEEKLMKGQIEFKIENEDIHMNMETYLHDEIGPLAGKLHTARSRNDQVATDMHLYLKSVLSDLLKALRTLRETIVNLSVNHVDTLMPGYTHLQHAQPISFAQHLMAYYQMFTRDFDRFEFNVKHTDMNPLGAAALAGTTFPIDRELTTNLLQFEKAYANSMDAVSDRDFILEFLSNSSLLMMHLSRLCEELLLWSSHEFNFVSLSDNYSTGSSIMPQKKNPDMAELIRGKSGRVYGNLMSLLTVMKGLPLTYNKDLQEDKEGMFDSADTILTSLSVMDGMLSTMTVNRVNMEKATEQDFSNATELADYLAAKGLPFREAHELVGQLVLTCIKKGIYLQEVSLKDYQALSQLIEEDVYEILQSRTAVSRRNSLGGTGFESIKKQIEQAKKELQK.

This sequence belongs to the lyase 1 family. Argininosuccinate lyase subfamily.

The protein resides in the cytoplasm. It carries out the reaction 2-(N(omega)-L-arginino)succinate = fumarate + L-arginine. It functions in the pathway amino-acid biosynthesis; L-arginine biosynthesis; L-arginine from L-ornithine and carbamoyl phosphate: step 3/3. This Lactococcus lactis subsp. cremoris (strain SK11) protein is Argininosuccinate lyase.